The primary structure comprises 227 residues: Ribose-5-phosphate isomerase A (227 aa).

Residues 26–29, 82–85, and 95–98 each bind substrate; these read TGST, DGAD, and KGGG. Catalysis depends on Glu104, which acts as the Proton acceptor. Lys122 is a substrate binding site.

The protein belongs to the ribose 5-phosphate isomerase family. In terms of assembly, homodimer.

The catalysed reaction is aldehydo-D-ribose 5-phosphate = D-ribulose 5-phosphate. It functions in the pathway carbohydrate degradation; pentose phosphate pathway; D-ribose 5-phosphate from D-ribulose 5-phosphate (non-oxidative stage): step 1/1. Functionally, catalyzes the reversible conversion of ribose-5-phosphate to ribulose 5-phosphate. This Streptococcus pneumoniae (strain Hungary19A-6) protein is Ribose-5-phosphate isomerase A.